The chain runs to 733 residues: Phosphoribosylformylglycinamidine synthase subunit PurL (733 aa).

Histidine 41 is a catalytic residue. Tyrosine 44 and lysine 83 together coordinate ATP. Mg(2+) is bound at residue glutamate 85. Residues 86-89 (SHNH) and arginine 108 contribute to the substrate site. The active-site Proton acceptor is histidine 87. Mg(2+) is bound at residue aspartate 109. The tract at residues 212–232 (GASFASQELSEESEEKRPSVQ) is disordered. Glutamine 232 provides a ligand contact to substrate. Aspartate 260 provides a ligand contact to Mg(2+). 304–306 (ESQ) lines the substrate pocket. The ATP site is built by aspartate 488 and glycine 525. Asparagine 526 contacts Mg(2+). A substrate-binding site is contributed by serine 528.

This sequence belongs to the FGAMS family. As to quaternary structure, monomer. Part of the FGAM synthase complex composed of 1 PurL, 1 PurQ and 2 PurS subunits.

Its subcellular location is the cytoplasm. It carries out the reaction N(2)-formyl-N(1)-(5-phospho-beta-D-ribosyl)glycinamide + L-glutamine + ATP + H2O = 2-formamido-N(1)-(5-O-phospho-beta-D-ribosyl)acetamidine + L-glutamate + ADP + phosphate + H(+). Its pathway is purine metabolism; IMP biosynthesis via de novo pathway; 5-amino-1-(5-phospho-D-ribosyl)imidazole from N(2)-formyl-N(1)-(5-phospho-D-ribosyl)glycinamide: step 1/2. Functionally, part of the phosphoribosylformylglycinamidine synthase complex involved in the purines biosynthetic pathway. Catalyzes the ATP-dependent conversion of formylglycinamide ribonucleotide (FGAR) and glutamine to yield formylglycinamidine ribonucleotide (FGAM) and glutamate. The FGAM synthase complex is composed of three subunits. PurQ produces an ammonia molecule by converting glutamine to glutamate. PurL transfers the ammonia molecule to FGAR to form FGAM in an ATP-dependent manner. PurS interacts with PurQ and PurL and is thought to assist in the transfer of the ammonia molecule from PurQ to PurL. This chain is Phosphoribosylformylglycinamidine synthase subunit PurL, found in Thermoanaerobacter sp. (strain X514).